A 1074-amino-acid polypeptide reads, in one-letter code: MSLRSEARVNTSTLQKIAADMSNLIENLDTRELHFEGEEVEYDASPGDPTAQEACIPFSSIYNTQGFKEPNIQIYLSGCPVKAQVLEVERFTSTSRMPSVNLYTIELTHGEFTWQVKRKFKHFQEFHRELLKYKAFIRIPIPTKRHTFRRQNVKEEPREMPSLPRSSENAIQEEQFFGRRKQLEDYLTKILKMPMYRNYHATTEFLDVSQLSFIHDLGPKGLEGMIMKRSGGHRIPGVNCCGHGRACYRWSKRWLIVKDSFLLYMKPDSGAIAFVLLVDKEFRIKVGKKETETKYGLRIDNLSRTLILKCNSYRHARWWGGAIEEFIQKHGTDFLKDHRFGSYAAVHENILAKWYVNAKGYFEDIANAMEGATEEIFITDWWLSPEIFLKRPVVEGNRWRLDCILKRKAQQGVRIFIMLYKEVELALGINSEYTKRTLMRLHPNIKVMRHPDHVSSSVYLWAHHEKLVIIDQSVAFVGGIDLAYGRWDDNEHRLTDVGSVKRVTSGQSLGSLTAASVESMESLSLKDKHQSHKNEPVLKSVNDTDMKLKGIGKSRKFSKFSLYRQLHRRNLHNSDSISSVDSASSYFNHYRSHQNLIHGIKPHLKLFRPSSESEQGLTRHSADTGSIRSVQTGVGELHGETRFWHGKDYCNFVFKDWVQLDKPFADFIDRYSTPRMPWHDIGSVVHGKAARDVARHFIQRWNFTKIMKPKYRSLSYPFLLPKSQATAHELRYQVPGAVHAKAQLLRSAADWSAGIKHHEESIHAAYTHVIENSKHYIYIENQFFISCADDKVVFNKVGNAIAQRILKAHREGQRYRVYIVIPLLPGFEGDISTGGGNALQAIMHFNYRTMCRGESSILEQLKPELGNKWINYISFCGLRTHAELEGNLVTELIYVHSKLLIADDNTVIIGSANINDRSMLGKRDSEMAVIVQDTETVPSVMDGKEYQAGRFAQGLRLECFRLVLGYLSDPSEDIQDPVSDKFFKEIWVSTAARNATIYDKVFRCLPNDEVHNLIQLRDFINKPILAKEDRLRAEEELRKIRGFLVQFPFYFLSEENLLPSVGTKEAIVPMEVWT.

Residues 81–212 (VKAQVLEVER…TEFLDVSQLS (132 aa)) form the PX domain. The PH domain maps to 219–328 (PKGLEGMIMK…WGGAIEEFIQ (110 aa)). Residues cysteine 240 and cysteine 241 are each lipidated (S-palmitoyl cysteine). The 28-residue stretch at 459-486 (YLWAHHEKLVIIDQSVAFVGGIDLAYGR) folds into the PLD phosphodiesterase 1 domain. Residues 463-928 (HHEKLVIIDQ…MLGKRDSEMA (466 aa)) form a catalytic region. Serine 499, serine 561, and serine 629 each carry phosphoserine. A PLD phosphodiesterase 2 domain is found at 891 to 918 (ELIYVHSKLLIADDNTVIIGSANINDRS).

It belongs to the phospholipase D family. As to quaternary structure, interacts with PIP5K1B. Phosphorylated on serine and threonine residues. Post-translationally, it is uncertain whether palmitoylation is on Cys-240 and/or Cys-241. Palmitoylation is required prior to phosphorylation.

It localises to the cytoplasm. The protein localises to the perinuclear region. It is found in the endoplasmic reticulum membrane. The protein resides in the golgi apparatus membrane. Its subcellular location is the late endosome membrane. It carries out the reaction a 1,2-diacyl-sn-glycero-3-phosphocholine + H2O = a 1,2-diacyl-sn-glycero-3-phosphate + choline + H(+). The enzyme catalyses ethanol + a 1,2-diacyl-sn-glycero-3-phosphocholine = 1,2-diacyl-sn-glycero-3-phosphoethanol + choline. It catalyses the reaction 1,2-dihexadecanoyl-sn-glycero-3-phosphocholine + H2O = 1,2-dihexadecanoyl-sn-glycero-3-phosphate + choline + H(+). Stimulated by phosphatidylinositol 4,5-bisphosphate and phosphatidylinositol 3,4,5-trisphosphate, activated by the phosphokinase C-alpha, by the ADP-ribosylation factor-1 (ARF-1), and to a lesser extent by GTP-binding proteins: RHO A, RAC-1 and CDC42. Inhibited by oleate. Functionally, function as phospholipase selective for phosphatidylcholine. Implicated as a critical step in numerous cellular pathways, including signal transduction, membrane trafficking, and the regulation of mitosis. May be involved in the regulation of perinuclear intravesicular membrane traffic. The chain is Phospholipase D1 from Rattus norvegicus (Rat).